The chain runs to 470 residues: MTLTTRFAPSPTGYLHVGGARTALYSWLYAKKNGGDFILRIEDTDLERSTQASVDAIMDGMNWLNLEWTHGPYFQTERFDRYNEAIEQLIASGNAYRCYSTSEEVDAMREEAKAKGEIEKYNGLWRDRTDHPADKPFVIRFKNPLEGDVIIKDMVKGDIAISNGQLDDLIIARSDGTPTYNLTVVVDDWDMKVSHVVRGDDHVSNTPKQINILRALGADVPQYAHIPMILGDDGKRLSKRHGAVGVMQYRDDGFLPEALLNYLVRLGWSHGDQEIFSREEMIELFDLKDCNRAPSGFNTDKLIWVNQHYMKTMDPAYVAEHLAWHMADQGINTENGPALADVVRIQADRVKTLKEMADISRYFYEDFTELDAKAVKKHLRPVVKEPMILVKEKLAALTDWSPEPIHAAINDTAVELELGMGKVGMPLRVAATGGGNSPSLDITLALLDQSKVIERIEQALVVVEARIAAG.

The 'HIGH' region motif lies at 9-19 (PSPTGYLHVGG). A 'KMSKS' region motif is present at residues 236–240 (RLSKR). Lys239 serves as a coordination point for ATP.

Belongs to the class-I aminoacyl-tRNA synthetase family. Glutamate--tRNA ligase type 1 subfamily. As to quaternary structure, monomer.

Its subcellular location is the cytoplasm. The enzyme catalyses tRNA(Glu) + L-glutamate + ATP = L-glutamyl-tRNA(Glu) + AMP + diphosphate. In terms of biological role, catalyzes the attachment of glutamate to tRNA(Glu) in a two-step reaction: glutamate is first activated by ATP to form Glu-AMP and then transferred to the acceptor end of tRNA(Glu). The sequence is that of Glutamate--tRNA ligase from Colwellia psychrerythraea (strain 34H / ATCC BAA-681) (Vibrio psychroerythus).